Here is a 156-residue protein sequence, read N- to C-terminus: ATP synthase subunit b (156 aa).

Residues 11-31 traverse the membrane as a helical segment; it reads AIAFVLFVIFCMKYVWPPIMA.

The protein belongs to the ATPase B chain family. In terms of assembly, F-type ATPases have 2 components, F(1) - the catalytic core - and F(0) - the membrane proton channel. F(1) has five subunits: alpha(3), beta(3), gamma(1), delta(1), epsilon(1). F(0) has three main subunits: a(1), b(2) and c(10-14). The alpha and beta chains form an alternating ring which encloses part of the gamma chain. F(1) is attached to F(0) by a central stalk formed by the gamma and epsilon chains, while a peripheral stalk is formed by the delta and b chains.

The protein localises to the cell inner membrane. F(1)F(0) ATP synthase produces ATP from ADP in the presence of a proton or sodium gradient. F-type ATPases consist of two structural domains, F(1) containing the extramembraneous catalytic core and F(0) containing the membrane proton channel, linked together by a central stalk and a peripheral stalk. During catalysis, ATP synthesis in the catalytic domain of F(1) is coupled via a rotary mechanism of the central stalk subunits to proton translocation. In terms of biological role, component of the F(0) channel, it forms part of the peripheral stalk, linking F(1) to F(0). The polypeptide is ATP synthase subunit b (Yersinia pseudotuberculosis serotype O:1b (strain IP 31758)).